Consider the following 856-residue polypeptide: Leucine--tRNA ligase (856 aa).

The short motif at 53–63 (PYPSGNLHMGH) is the 'HIGH' region element. The 'KMSKS' region motif lies at 622–626 (KMSKS). An ATP-binding site is contributed by K625.

This sequence belongs to the class-I aminoacyl-tRNA synthetase family.

It localises to the cytoplasm. The catalysed reaction is tRNA(Leu) + L-leucine + ATP = L-leucyl-tRNA(Leu) + AMP + diphosphate. In Prochlorococcus marinus (strain MIT 9215), this protein is Leucine--tRNA ligase.